Here is a 224-residue protein sequence, read N- to C-terminus: MNPAWALLRLASPQLPIGGYSYSQGLEMAVENGRVADAASARRWISDQLLLNLARFEAPLLLAHCQAALEADWPRLAQLCEEHRASRETRELYQESRQMGYSLQQLLNGLPELDDAARRFLEQHTEPHLALGWALAARAWRISPADALAAWLWSWLENQLAVLMKTLPLGQQAAQRLTSELLPLLQQAQQDASRIDPNPLGSAAFGLSLACMAHERQYSRLFRS.

Belongs to the UreF family. As to quaternary structure, ureD, UreF and UreG form a complex that acts as a GTP-hydrolysis-dependent molecular chaperone, activating the urease apoprotein by helping to assemble the nickel containing metallocenter of UreC. The UreE protein probably delivers the nickel.

The protein resides in the cytoplasm. Functionally, required for maturation of urease via the functional incorporation of the urease nickel metallocenter. The protein is Urease accessory protein UreF of Pseudomonas fluorescens (strain SBW25).